Consider the following 212-residue polypeptide: MSLFDKKHLVTQADALPGRNTPMPIATLHAVNEHSMTNVPAGMEIAYFAMGCFWGVERLFWQLPGVYSTAAGYAGGYTPNPTYREVCSGQTGHAEAVRIVYDPAVIRYEQLLQIFWENHDPTQGMQQGNDHGTQYRSAIYPLTPEQSAAAHASRERFQSAMAAAGNHRPITTEITHATPFYYAEDEHQQYLHKNPYGYCGIGGIGVCLPPDA.

The active site involves Cys52.

This sequence belongs to the MsrA Met sulfoxide reductase family.

The catalysed reaction is L-methionyl-[protein] + [thioredoxin]-disulfide + H2O = L-methionyl-(S)-S-oxide-[protein] + [thioredoxin]-dithiol. It catalyses the reaction [thioredoxin]-disulfide + L-methionine + H2O = L-methionine (S)-S-oxide + [thioredoxin]-dithiol. Functionally, has an important function as a repair enzyme for proteins that have been inactivated by oxidation. Catalyzes the reversible oxidation-reduction of methionine sulfoxide in proteins to methionine. This is Peptide methionine sulfoxide reductase MsrA from Salmonella schwarzengrund (strain CVM19633).